The chain runs to 125 residues: Fluoride-specific ion channel FluC (125 aa).

4 consecutive transmembrane segments (helical) span residues 6 to 26, 35 to 55, 66 to 86, and 100 to 120; these read VLVM…GLGI, FLFG…GLFA, LLLL…ALSI, and AMGY…AGYL. Gly-76 and Thr-79 together coordinate Na(+).

It belongs to the fluoride channel Fluc/FEX (TC 1.A.43) family.

The protein localises to the cell inner membrane. The catalysed reaction is fluoride(in) = fluoride(out). With respect to regulation, na(+) is not transported, but it plays an essential structural role and its presence is essential for fluoride channel function. Its function is as follows. Fluoride-specific ion channel. Important for reducing fluoride concentration in the cell, thus reducing its toxicity. The chain is Fluoride-specific ion channel FluC from Gloeobacter violaceus (strain ATCC 29082 / PCC 7421).